The following is a 589-amino-acid chain: Transcription factor atf-6 homolog (589 aa).

A compositionally biased stretch (basic and acidic residues) spans 1 to 16 (MNFDNTVHESNFDDLL). A disordered region spans residues 1-82 (MNFDNTVHES…SSPPLSCANF (82 aa)). 2 stretches are compositionally biased toward low complexity: residues 36-54 (GTDE…FSDQ) and 67-78 (GDSSSDSSPPLS). A bZIP domain is found at 250 to 299 (QNRKIRNRMYAQASRMRKKEADEHMKMNLQELLQENEILRTENAALKQRL). Residues 252 to 275 (RKIRNRMYAQASRMRKKEADEHMK) are basic motif. A coiled-coil region spans residues 271-305 (DEHMKMNLQELLQENEILRTENAALKQRLAFFEHE). The interval 281-295 (LLQENEILRTENAAL) is leucine-zipper. A helical transmembrane segment spans residues 324–344 (IIAAGSVLMMFGLFAVISPFN).

It belongs to the bZIP family. ATF subfamily.

The protein localises to the nucleus. Its subcellular location is the membrane. Its function is as follows. Transcription factor. Plays a role in the unfolded protein response (UPR), perhaps mainly during constitutive endoplasmic reticulum (ER) stress, by activating transcription of genes involved in the UPR. Plays a role in modulating lifespan, acting by positively regulating expression of calcium-binding chaperone crt-1, thereby influencing ER calcium homeostasis. By activating the UPR pathway, confers adaptive protection to subsequent exposure to hypoxia. Involved in protection against proteotoxicity, probably acting via the UPR. Probably acts in the UPR in parallel with the ire-1-xbp-1 and pek-1 pathways. May be regulated by endopeptidase S2P-mediated proteolytic cleavage. In Caenorhabditis elegans, this protein is Transcription factor atf-6 homolog.